A 44-amino-acid chain; its full sequence is Benzaldehyde dehydrogenase [NAD(+)] II (44 aa).

It belongs to the aldehyde dehydrogenase family.

The catalysed reaction is benzaldehyde + NAD(+) + H2O = benzoate + NADH + 2 H(+). The protein is Benzaldehyde dehydrogenase [NAD(+)] II of Acinetobacter guillouiae (Acinetobacter genomosp. 11).